We begin with the raw amino-acid sequence, 220 residues long: Large ribosomal subunit protein uL16 (220 aa).

Belongs to the universal ribosomal protein uL16 family. In terms of assembly, component of the large ribosomal subunit. Mature ribosomes consist of a small (40S) and a large (60S) subunit. The 40S subunit contains about 32 different proteins and 1 molecule of RNA (18S). The 60S subunit contains 45 different proteins and 3 molecules of RNA (25S, 5.8S and 5S).

The protein resides in the cytoplasm. In terms of biological role, component of the ribosome, a large ribonucleoprotein complex responsible for the synthesis of proteins in the cell. The small ribosomal subunit (SSU) binds messenger RNAs (mRNAs) and translates the encoded message by selecting cognate aminoacyl-transfer RNA (tRNA) molecules. The large subunit (LSU) contains the ribosomal catalytic site termed the peptidyl transferase center (PTC), which catalyzes the formation of peptide bonds, thereby polymerizing the amino acids delivered by tRNAs into a polypeptide chain. The nascent polypeptides leave the ribosome through a tunnel in the LSU and interact with protein factors that function in enzymatic processing, targeting, and the membrane insertion of nascent chains at the exit of the ribosomal tunnel. This chain is Large ribosomal subunit protein uL16, found in Candida albicans (strain SC5314 / ATCC MYA-2876) (Yeast).